Consider the following 135-residue polypeptide: UPF0355 protein SACOL0457 (135 aa).

Belongs to the UPF0355 family.

The polypeptide is UPF0355 protein SACOL0457 (Staphylococcus aureus (strain COL)).